The chain runs to 273 residues: Large ribosomal subunit protein uL2 (273 aa).

Residues 228–273 (IDHPHGGGEGKTSGGRHPVTPWGFSTKGKKTRKNKRTSKFIVKKRK) are disordered. Positions 254–273 (KGKKTRKNKRTSKFIVKKRK) are enriched in basic residues.

The protein belongs to the universal ribosomal protein uL2 family. Part of the 50S ribosomal subunit. Forms a bridge to the 30S subunit in the 70S ribosome.

Its function is as follows. One of the primary rRNA binding proteins. Required for association of the 30S and 50S subunits to form the 70S ribosome, for tRNA binding and peptide bond formation. It has been suggested to have peptidyltransferase activity; this is somewhat controversial. Makes several contacts with the 16S rRNA in the 70S ribosome. This chain is Large ribosomal subunit protein uL2, found in Rickettsia typhi (strain ATCC VR-144 / Wilmington).